The primary structure comprises 309 residues: Diadenylate cyclase (309 aa).

Positions 144-301 constitute a DAC domain; sequence TITLYELFET…DGKIVFETDP (158 aa).

This sequence belongs to the adenylate cyclase family. DacZ subfamily. Mn(2+) is required as a cofactor.

It catalyses the reaction 2 ATP = 3',3'-c-di-AMP + 2 diphosphate. In terms of biological role, diadenylate cyclase that catalyzes the condensation of 2 ATP molecules into cyclic di-AMP (c-di-AMP). c-di-AMP is a second messenger for intracellular signal transduction involved in the control of important regulatory processes such as osmoregulation. The polypeptide is Diadenylate cyclase (Methanocaldococcus jannaschii (strain ATCC 43067 / DSM 2661 / JAL-1 / JCM 10045 / NBRC 100440) (Methanococcus jannaschii)).